The primary structure comprises 447 residues: Alpha-1,3-mannosyl-glycoprotein 2-beta-N-acetylglucosaminyltransferase (447 aa).

Topologically, residues 1–6 (MLKKQS) are cytoplasmic. Residues 7-29 (AGLVLWGAIIFVGWNALLLLFFW) traverse the membrane as a helical; Signal-anchor for type II membrane protein segment. Residues 30-447 (TRPAPGRLPS…TWNGYDPSWN (418 aa)) are Lumenal-facing. The cysteines at positions 115 and 145 are disulfide-linked. Residues Arg117, Asp144, His190, and Asp212 each coordinate substrate. Asp213 contacts Mn(2+). A disulfide bridge connects residues Cys239 and Cys305. Catalysis depends on Asp291, which acts as the Proton acceptor. Position 322 (Ser322) interacts with substrate.

Belongs to the glycosyltransferase 13 family. As to quaternary structure, interacts with MGAT4D. Interacts with BRI3. The cofactor is Mn(2+). In terms of tissue distribution, appears to be present in all tissues.

The protein resides in the golgi apparatus membrane. Its subcellular location is the cytoplasm. The protein localises to the perinuclear region. It catalyses the reaction N(4)-(alpha-D-Man-(1-&gt;3)-[alpha-D-Man-(1-&gt;3)-[alpha-D-Man-(1-&gt;6)]-alpha-D-Man-(1-&gt;6)]-beta-D-Man-(1-&gt;4)-beta-D-GlcNAc-(1-&gt;4)-beta-D-GlcNAc)-L-asparaginyl-[protein] (N-glucan mannose isomer 5A1,2) + UDP-N-acetyl-alpha-D-glucosamine = N(4)-{beta-D-GlcNAc-(1-&gt;2)-alpha-D-Man-(1-&gt;3)-[alpha-D-Man-(1-&gt;3)-[alpha-D-Man-(1-&gt;6)]-alpha-D-Man-(1-&gt;6)]-beta-D-Man-(1-&gt;4)-beta-D-GlcNAc-(1-&gt;4)-beta-D-GlcNAc}-L-asparaginyl-[protein] + UDP + H(+). It functions in the pathway protein modification; protein glycosylation. Functionally, initiates complex N-linked carbohydrate formation. Essential for the conversion of high-mannose to hybrid and complex N-glycans. This chain is Alpha-1,3-mannosyl-glycoprotein 2-beta-N-acetylglucosaminyltransferase (Mgat1), found in Rattus norvegicus (Rat).